The following is a 407-amino-acid chain: uncharacterized protein (407 aa).

A run of 12 helical transmembrane segments spans residues 22-42 (IVSVVSFTFICYLTIGLPLAV), 51-71 (LGFSAIVAGAAISVQYFATLA), 101-121 (ALLLSAFAFARWPAASIVLLV), 126-146 (VLGIGESLVGTGAILWGIGRV), 154-174 (VISWNGIATYGALAIGAPVGV), 179-199 (ALIPAVLGMLVIALAALGYYL), 227-247 (GLGLALGSAGFGSIATFITLY), 258-278 (LSLTVFGTLFIGARLLFANTI), 286-306 (VAIVSFAFECAGLLMLWLAPV), 309-329 (VALVGAALTGFGFALIFPALG), 347-367 (AYSVFLDLSLGITGPLAGYVA), and 369-389 (AFGYPQVFLCAAVAAAAGVAL).

Belongs to the major facilitator superfamily. YhhS family.

The protein localises to the cell inner membrane. This is an uncharacterized protein from Burkholderia pseudomallei (strain 1106a).